The primary structure comprises 271 residues: Aminoglycoside N(3)-acetyltransferase III (271 aa).

CoA contacts are provided by His-31, Ala-32, Ser-33, Val-34, and Lys-35. Residues Tyr-64, Asp-72, and Glu-102 each contribute to the a 2-deoxystreptamine antibiotic site. CoA contacts are provided by Ser-104, Val-105, and Phe-109. A 2-deoxystreptamine antibiotic-binding residues include Glu-123, Tyr-146, and Asp-170. CoA-binding residues include Thr-171 and Thr-173. Residues His-176, Thr-212, Gly-213, and Phe-221 each contribute to the a 2-deoxystreptamine antibiotic site.

Belongs to the antibiotic N-acetyltransferase family. Homodimer.

The enzyme catalyses a 2-deoxystreptamine antibiotic + acetyl-CoA = an N(3)-acetyl-2-deoxystreptamine antibiotic + CoA + H(+). In terms of biological role, resistance to antibiotics containing the 2-deoxy-streptamine ring including dibekacin, gentamicin, kanamycin, sisomicin, tobramycin and neomycin, but not to amikacin or netilmicin. Acetylates a broad range of both 4,5- and 4,6-disubstituted aminoglycosides, including neomycin, paromomycin, ribostamycin, sisomicin, gentamicin, tobramycin and kanamycin, with no preference of one disubstitution over the other. Acetylates sisomicin and kanamycin most and least efficiently, respectively. Does not modify plazomicin. This chain is Aminoglycoside N(3)-acetyltransferase III, found in Pseudomonas aeruginosa.